We begin with the raw amino-acid sequence, 358 residues long: Phospho-N-acetylmuramoyl-pentapeptide-transferase (358 aa).

The next 10 helical transmembrane spans lie at 24 to 44 (FRSI…GPWV), 73 to 93 (TMGG…WADL), 95 to 115 (NVFI…GFVD), 134 to 154 (MFWQ…LPGF), 169 to 189 (ELGI…SNAV), 197 to 217 (GLAI…CYIA), 233 to 253 (GAGE…GFLW), 261 to 281 (VFMG…LAVL), 286 to 306 (ILLV…IFQV), and 335 to 355 (KIIV…ISTL).

The protein belongs to the glycosyltransferase 4 family. MraY subfamily. Mg(2+) serves as cofactor.

It is found in the cell inner membrane. The enzyme catalyses UDP-N-acetyl-alpha-D-muramoyl-L-alanyl-gamma-D-glutamyl-meso-2,6-diaminopimeloyl-D-alanyl-D-alanine + di-trans,octa-cis-undecaprenyl phosphate = di-trans,octa-cis-undecaprenyl diphospho-N-acetyl-alpha-D-muramoyl-L-alanyl-D-glutamyl-meso-2,6-diaminopimeloyl-D-alanyl-D-alanine + UMP. Its pathway is cell wall biogenesis; peptidoglycan biosynthesis. Functionally, catalyzes the initial step of the lipid cycle reactions in the biosynthesis of the cell wall peptidoglycan: transfers peptidoglycan precursor phospho-MurNAc-pentapeptide from UDP-MurNAc-pentapeptide onto the lipid carrier undecaprenyl phosphate, yielding undecaprenyl-pyrophosphoryl-MurNAc-pentapeptide, known as lipid I. This chain is Phospho-N-acetylmuramoyl-pentapeptide-transferase, found in Geobacter sp. (strain M21).